A 757-amino-acid polypeptide reads, in one-letter code: E3 ubiquitin-protein ligase RNF12-B (757 aa).

Positions 1–10 (MESADSTGKG) are enriched in polar residues. Disordered regions lie at residues 1–29 (MESADSTGKGSTEQSESQRQSQMDRLDRE), 68–519 (LQQI…TYES), and 619–652 (EPAEPVAPVESDEGSNVATSATRREGRNSRGGVT). Positions 11-21 (STEQSESQRQS) are enriched in low complexity. Composition is skewed to polar residues over residues 110-138 (SVRQTGNTTRSGQRGNQSWRAVSRTNPNS) and 147-163 (INVNRTSGTASMPSLDQ). Tandem repeats lie at residues 197–202 (PESVDE), 203–208 (PVSVAE), 209–214 (PVSVAE), 215–220 (PVSVAE), 221–226 (PESVAE), 227–232 (PESVAA), 237–242 (PESVPE), 243–248 (PESVPE), 249–254 (PESVPE), 255–260 (PESVPE), 261–266 (PESVPE), 267–272 (PESVPE), 273–278 (PESVPE), 279–284 (PESVPE), 285–290 (PESVPE), 291–296 (PESVPE), 297–302 (PESVPE), 303–308 (PESVPE), 309–314 (PESIAE), 315–320 (PESVPV), and 321–326 (PESVPV). The 21 X 6 AA approximate repeats of P-[EV]-S-V-[PA]-[EV] stretch occupies residues 197 to 326 (PESVDEPVSV…SVPVPESVPV (130 aa)). Residues 202–237 (EPVSVAEPVSVAEPVSVAEPESVAEPESVAASVPVP) show a composition bias toward low complexity. Residues 245-313 (SVPEPESVPE…ESVPEPESIA (69 aa)) are compositionally biased toward acidic residues. Over residues 314–327 (EPESVPVPESVPVA) the composition is skewed to low complexity. The span at 352–367 (RSPDQRRTRARTDRSR) shows a compositional bias: basic and acidic residues. Residues 383 to 392 (HSSSQTVDAS) are compositionally biased toward polar residues. The segment covering 408-424 (SSQVHSSSSNETEGSSR) has biased composition (low complexity). Residues 428–452 (HITARQQALGTEGQSQSTVHLSNPE) are compositionally biased toward polar residues. Over residues 453–466 (SRSSSQTPQTDSPS) the composition is skewed to low complexity. Positions 467-476 (NAETTGTGQR) are enriched in polar residues. Residues 490 to 500 (RPGDYRQRDSI) are compositionally biased toward basic and acidic residues. Positions 501–517 (ANRTRSRSQTPNNTVTY) are enriched in polar residues. Residues 703–744 (CSVCITEYTEGNKLRKLPCSHEYHIHCIDRWLSENSTCPICR) form an RING-type; atypical zinc finger. A PDZ-binding motif is present at residues 754-757 (ESIV).

It belongs to the RNF12 family. In terms of assembly, forms homodimers through the C-terminal region. The N-terminus interacts with the homeobox of LIM/homeobox factor lhx1/lim1, with lhx3/lim3 and lhx5/lim5, and with the N-terminus of ldb1. In terms of tissue distribution, shows overlapping expression with lhx1/lim1 and ldb1 in the gastrula mesoderm, and expression overlaps with ldb1 throughout early embryogenesis. After gastrulation, expression is gradually restricted to tissues originated from the ectoderm, the neuroectoderm, neural crest and epidermis, and subsequently to the neural tube as well as the head and tailbud region.

It is found in the nucleus. It catalyses the reaction S-ubiquitinyl-[E2 ubiquitin-conjugating enzyme]-L-cysteine + [acceptor protein]-L-lysine = [E2 ubiquitin-conjugating enzyme]-L-cysteine + N(6)-ubiquitinyl-[acceptor protein]-L-lysine.. It participates in protein modification; protein ubiquitination. In terms of biological role, acts as an E3 ubiquitin-protein ligase specific for ldb1, mediating ubiquitination and proteasome-dependent degradation of excess ldb1 in a RING-dependent manner. Does not degrade ldb1 bound to lhx1/lim1, nor lim1 itself and thus contributes to the establishment of proper ldb1-lhx1/lim1 stoichiometry and the formation of a ldb1-lhx1/lim1 complex. Interferes with Spemann organizer function and suppresses secondary axis formation induced by ldb1 and lhx1/lim1. This chain is E3 ubiquitin-protein ligase RNF12-B (rnf12-b), found in Xenopus laevis (African clawed frog).